Consider the following 204-residue polypeptide: High mobility group-T protein (204 aa).

DNA-binding regions (HMG box) lie at residues 8-78 (PRGK…RSYI) and 94-162 (PKRP…TAYR). Residues 162–204 (RNKGKVPVSMPAKAAAPAKDDDDDDDDDDDDEDDDDDDDEDDE) form a disordered region. The span at 181 to 204 (DDDDDDDDDDDDEDDDDDDDEDDE) shows a compositional bias: acidic residues.

The protein belongs to the HMGB family.

It localises to the nucleus. It is found in the chromosome. Functionally, binds preferentially single-stranded DNA and unwinds double-stranded DNA. The polypeptide is High mobility group-T protein (Oncorhynchus mykiss (Rainbow trout)).